A 130-amino-acid chain; its full sequence is Small ribosomal subunit protein uS11 (130 aa).

It belongs to the universal ribosomal protein uS11 family. As to quaternary structure, part of the 30S ribosomal subunit. Interacts with proteins S7 and S18. Binds to IF-3.

Functionally, located on the platform of the 30S subunit, it bridges several disparate RNA helices of the 16S rRNA. Forms part of the Shine-Dalgarno cleft in the 70S ribosome. The sequence is that of Small ribosomal subunit protein uS11 from Syntrophobacter fumaroxidans (strain DSM 10017 / MPOB).